A 245-amino-acid chain; its full sequence is Ribosomal RNA small subunit methyltransferase G (245 aa).

S-adenosyl-L-methionine is bound by residues Gly-85, Phe-90, 108–110, 136–137, and Arg-155; these read DST and AE.

It belongs to the methyltransferase superfamily. RNA methyltransferase RsmG family.

The protein resides in the cytoplasm. Its function is as follows. Specifically methylates the N7 position of a guanine in 16S rRNA. This Nostoc sp. (strain PCC 7120 / SAG 25.82 / UTEX 2576) protein is Ribosomal RNA small subunit methyltransferase G.